Here is a 131-residue protein sequence, read N- to C-terminus: Small ribosomal subunit protein uS11 (131 aa).

This sequence belongs to the universal ribosomal protein uS11 family. In terms of assembly, part of the 30S ribosomal subunit. Interacts with proteins S7 and S18. Binds to IF-3.

Functionally, located on the platform of the 30S subunit, it bridges several disparate RNA helices of the 16S rRNA. Forms part of the Shine-Dalgarno cleft in the 70S ribosome. The chain is Small ribosomal subunit protein uS11 from Helicobacter acinonychis (strain Sheeba).